Reading from the N-terminus, the 74-residue chain is Conotoxin SIIID (74 aa).

An N-terminal signal peptide occupies residues 1–20 (MMSKLGVLLTVCLLLFPLTA). The propeptide occupies 21–53 (LPLDGDQPADQLEDRMQDDISSEQYPSFVRRQK). Intrachain disulfides connect cysteine 54–cysteine 71, cysteine 55–cysteine 73, and cysteine 61–cysteine 74.

The protein belongs to the conotoxin M superfamily. Post-translationally, three disulfide isomers have been synthesized and tested. SIIID with the disulfide pairing 1-4;2-5;3-6 is the most active. Expressed by the venom duct.

The protein localises to the secreted. Its function is as follows. The short synthetic peptide SIIID (range 54-74, with disulfide pairing 1-4, 2-5 and 3-6) reversibly inhibits human alpha-7/CHRNA7 acetylcholine receptor (IC(50)=880 nM). Shows a paralytic effect in fish. The polypeptide is Conotoxin SIIID (Conus striatus (Striated cone)).